A 320-amino-acid chain; its full sequence is Aspartate carbamoyltransferase catalytic subunit (320 aa).

Carbamoyl phosphate contacts are provided by Arg-68 and Thr-69. L-aspartate is bound at residue Lys-96. Carbamoyl phosphate contacts are provided by Arg-118, His-148, and Gln-151. L-aspartate is bound by residues Arg-181 and Arg-236. Carbamoyl phosphate contacts are provided by Gly-277 and Pro-278.

It belongs to the aspartate/ornithine carbamoyltransferase superfamily. ATCase family. Heterododecamer (2C3:3R2) of six catalytic PyrB chains organized as two trimers (C3), and six regulatory PyrI chains organized as three dimers (R2).

The catalysed reaction is carbamoyl phosphate + L-aspartate = N-carbamoyl-L-aspartate + phosphate + H(+). It functions in the pathway pyrimidine metabolism; UMP biosynthesis via de novo pathway; (S)-dihydroorotate from bicarbonate: step 2/3. Catalyzes the condensation of carbamoyl phosphate and aspartate to form carbamoyl aspartate and inorganic phosphate, the committed step in the de novo pyrimidine nucleotide biosynthesis pathway. This is Aspartate carbamoyltransferase catalytic subunit from Variovorax paradoxus (strain S110).